The sequence spans 211 residues: Protein DEHYDRATION-INDUCED 19 homolog 7 (211 aa).

Position 113 is a phosphothreonine (T113). Positions 163-194 (GDSVAQVSPKDTSKSKIQQESFSNEDQEKAKK) are disordered. Over residues 167–186 (AQVSPKDTSKSKIQQESFSN) the composition is skewed to polar residues.

It belongs to the Di19 family. In terms of processing, not phosphorylated in vitro by CPK3 or CPK11. Expressed in seedlings, roots, leaves, stems, flowers and siliques.

The protein resides in the nucleus. Involved in both red and blue light signaling. The chain is Protein DEHYDRATION-INDUCED 19 homolog 7 (DI19-7) from Arabidopsis thaliana (Mouse-ear cress).